The following is a 116-amino-acid chain: Ribosome-binding factor A (116 aa).

Belongs to the RbfA family. Monomer. Binds 30S ribosomal subunits, but not 50S ribosomal subunits or 70S ribosomes.

It localises to the cytoplasm. One of several proteins that assist in the late maturation steps of the functional core of the 30S ribosomal subunit. Associates with free 30S ribosomal subunits (but not with 30S subunits that are part of 70S ribosomes or polysomes). Required for efficient processing of 16S rRNA. May interact with the 5'-terminal helix region of 16S rRNA. The sequence is that of Ribosome-binding factor A from Streptococcus pyogenes serotype M5 (strain Manfredo).